Here is a 420-residue protein sequence, read N- to C-terminus: D-inositol 3-phosphate glycosyltransferase (420 aa).

His13 contacts 1D-myo-inositol 3-phosphate. UDP-N-acetyl-alpha-D-glucosamine-binding positions include 19–20 and Gly27; that span reads QP. 1D-myo-inositol 3-phosphate contacts are provided by residues 24–29, Lys82, Tyr115, Thr139, and Arg159; that span reads DAGGMN. Residues Arg233, Lys238, and Val294 each contribute to the UDP-N-acetyl-alpha-D-glucosamine site. The Mg(2+) site is built by Phe303, Arg304, and Ala306. UDP-N-acetyl-alpha-D-glucosamine contacts are provided by Glu316 and Glu324. Residue Thr330 coordinates Mg(2+).

This sequence belongs to the glycosyltransferase group 1 family. MshA subfamily. Homodimer.

It carries out the reaction 1D-myo-inositol 3-phosphate + UDP-N-acetyl-alpha-D-glucosamine = 1D-myo-inositol 2-acetamido-2-deoxy-alpha-D-glucopyranoside 3-phosphate + UDP + H(+). Functionally, catalyzes the transfer of a N-acetyl-glucosamine moiety to 1D-myo-inositol 3-phosphate to produce 1D-myo-inositol 2-acetamido-2-deoxy-glucopyranoside 3-phosphate in the mycothiol biosynthesis pathway. This Pseudarthrobacter chlorophenolicus (strain ATCC 700700 / DSM 12829 / CIP 107037 / JCM 12360 / KCTC 9906 / NCIMB 13794 / A6) (Arthrobacter chlorophenolicus) protein is D-inositol 3-phosphate glycosyltransferase.